A 455-amino-acid chain; its full sequence is Probable glycine dehydrogenase (decarboxylating) subunit 1 (455 aa).

It belongs to the GcvP family. N-terminal subunit subfamily. As to quaternary structure, the glycine cleavage system is composed of four proteins: P, T, L and H. In this organism, the P 'protein' is a heterodimer of two subunits.

It catalyses the reaction N(6)-[(R)-lipoyl]-L-lysyl-[glycine-cleavage complex H protein] + glycine + H(+) = N(6)-[(R)-S(8)-aminomethyldihydrolipoyl]-L-lysyl-[glycine-cleavage complex H protein] + CO2. In terms of biological role, the glycine cleavage system catalyzes the degradation of glycine. The P protein binds the alpha-amino group of glycine through its pyridoxal phosphate cofactor; CO(2) is released and the remaining methylamine moiety is then transferred to the lipoamide cofactor of the H protein. The protein is Probable glycine dehydrogenase (decarboxylating) subunit 1 of Francisella tularensis subsp. tularensis (strain FSC 198).